We begin with the raw amino-acid sequence, 206 residues long: Small ribosomal subunit protein uS4B (206 aa).

The S4 RNA-binding domain occupies Gly96–Gly156.

The protein belongs to the universal ribosomal protein uS4 family. In terms of assembly, part of the 30S ribosomal subunit. Contacts protein S5. The interaction surface between S4 and S5 is involved in control of translational fidelity.

One of the primary rRNA binding proteins, it binds directly to 16S rRNA where it nucleates assembly of the body of the 30S subunit. Functionally, with S5 and S12 plays an important role in translational accuracy. The polypeptide is Small ribosomal subunit protein uS4B (Psychromonas ingrahamii (strain DSM 17664 / CCUG 51855 / 37)).